A 296-amino-acid polypeptide reads, in one-letter code: Diaminopimelate epimerase (296 aa).

Substrate is bound by residues Asn11 and Asn78. The active-site Proton donor is Cys87. Residues 88 to 89 (GN), Asn167, Asn203, and 221 to 222 (ER) contribute to the substrate site. The active-site Proton acceptor is the Cys230. Residue 231–232 (GT) participates in substrate binding.

The protein belongs to the diaminopimelate epimerase family. Homodimer.

It localises to the cytoplasm. It catalyses the reaction (2S,6S)-2,6-diaminopimelate = meso-2,6-diaminopimelate. It participates in amino-acid biosynthesis; L-lysine biosynthesis via DAP pathway; DL-2,6-diaminopimelate from LL-2,6-diaminopimelate: step 1/1. Functionally, catalyzes the stereoinversion of LL-2,6-diaminopimelate (L,L-DAP) to meso-diaminopimelate (meso-DAP), a precursor of L-lysine and an essential component of the bacterial peptidoglycan. The chain is Diaminopimelate epimerase from Mycobacterium leprae (strain Br4923).